The sequence spans 214 residues: uncharacterized protein (214 aa).

The next 2 membrane-spanning stretches (helical) occupy residues 19–39 (IAIF…SYIL) and 50–70 (LALF…LLIG).

The protein localises to the cell membrane. This is an uncharacterized protein from Methanocaldococcus jannaschii (strain ATCC 43067 / DSM 2661 / JAL-1 / JCM 10045 / NBRC 100440) (Methanococcus jannaschii).